Reading from the N-terminus, the 93-residue chain is Small ribosomal subunit protein uS19 (93 aa).

The protein belongs to the universal ribosomal protein uS19 family.

Its function is as follows. Protein S19 forms a complex with S13 that binds strongly to the 16S ribosomal RNA. This Renibacterium salmoninarum (strain ATCC 33209 / DSM 20767 / JCM 11484 / NBRC 15589 / NCIMB 2235) protein is Small ribosomal subunit protein uS19.